We begin with the raw amino-acid sequence, 247 residues long: ATP synthase subunit a (247 aa).

A run of 6 helical transmembrane segments spans residues 24 to 44, 82 to 102, 112 to 132, 141 to 161, 181 to 201, and 206 to 226; these read IAFTTSSAYMLLAVVLIAAMM, FFPLVFSLFMFIFVSNIVGII, IIVTFSLALLVFLTVIIYGFY, LFVPSGIPAVILPLVVIIEII, GHVTLKVFASFVTMLGALGFV, and ALLPLGLTVALTGLELMVAFL.

It belongs to the ATPase A chain family. As to quaternary structure, F-type ATPases have 2 components, CF(1) - the catalytic core - and CF(0) - the membrane proton channel. CF(1) has five subunits: alpha(3), beta(3), gamma(1), delta(1), epsilon(1). CF(0) has four main subunits: a, b, b' and c.

The protein resides in the cell inner membrane. Key component of the proton channel; it plays a direct role in the translocation of protons across the membrane. In Bradyrhizobium sp. (strain ORS 278), this protein is ATP synthase subunit a.